A 272-amino-acid polypeptide reads, in one-letter code: SPbeta prophage-derived aminoglycoside N(3')-acetyltransferase-like protein YokD (272 aa).

CoA contacts are provided by residues leucine 38 to valine 44 and glutamine 113.

It belongs to the antibiotic N-acetyltransferase family. As to quaternary structure, homodimer.

In terms of biological role, may contribute to antibiotic resistance. This chain is SPbeta prophage-derived aminoglycoside N(3')-acetyltransferase-like protein YokD (yokD), found in Bacillus subtilis (strain 168).